Here is a 341-residue protein sequence, read N- to C-terminus: Tetraacyldisaccharide 4'-kinase (341 aa).

57–64 lines the ATP pocket; that stretch reads TVGGTGKT.

This sequence belongs to the LpxK family.

The enzyme catalyses a lipid A disaccharide + ATP = a lipid IVA + ADP + H(+). The protein operates within glycolipid biosynthesis; lipid IV(A) biosynthesis; lipid IV(A) from (3R)-3-hydroxytetradecanoyl-[acyl-carrier-protein] and UDP-N-acetyl-alpha-D-glucosamine: step 6/6. In terms of biological role, transfers the gamma-phosphate of ATP to the 4'-position of a tetraacyldisaccharide 1-phosphate intermediate (termed DS-1-P) to form tetraacyldisaccharide 1,4'-bis-phosphate (lipid IVA). The chain is Tetraacyldisaccharide 4'-kinase from Maricaulis maris (strain MCS10) (Caulobacter maris).